Here is a 116-residue protein sequence, read N- to C-terminus: Large ribosomal subunit protein bL19 (116 aa).

This sequence belongs to the bacterial ribosomal protein bL19 family.

Functionally, this protein is located at the 30S-50S ribosomal subunit interface and may play a role in the structure and function of the aminoacyl-tRNA binding site. The polypeptide is Large ribosomal subunit protein bL19 (Staphylococcus carnosus (strain TM300)).